The chain runs to 70 residues: DNA gyrase inhibitor YacG (70 aa).

C9, C12, C28, and C32 together coordinate Zn(2+). Positions E43–Q70 are disordered.

The protein belongs to the DNA gyrase inhibitor YacG family. As to quaternary structure, interacts with GyrB. Requires Zn(2+) as cofactor.

In terms of biological role, inhibits all the catalytic activities of DNA gyrase by preventing its interaction with DNA. Acts by binding directly to the C-terminal domain of GyrB, which probably disrupts DNA binding by the gyrase. The chain is DNA gyrase inhibitor YacG from Legionella pneumophila (strain Lens).